We begin with the raw amino-acid sequence, 456 residues long: Bifunctional protein GlmU (456 aa).

The interval methionine 1–arginine 230 is pyrophosphorylase. Residues leucine 9–glycine 12, lysine 23, glutamine 73, and glycine 78–threonine 79 contribute to the UDP-N-acetyl-alpha-D-glucosamine site. Aspartate 103 contributes to the Mg(2+) binding site. Positions 140, 155, 170, and 228 each coordinate UDP-N-acetyl-alpha-D-glucosamine. Asparagine 228 lines the Mg(2+) pocket. The tract at residues valine 231–asparagine 251 is linker. The N-acetyltransferase stretch occupies residues glycine 252 to lysine 456. UDP-N-acetyl-alpha-D-glucosamine contacts are provided by arginine 333 and lysine 351. Histidine 363 (proton acceptor) is an active-site residue. UDP-N-acetyl-alpha-D-glucosamine is bound by residues tyrosine 366 and asparagine 377. Acetyl-CoA contacts are provided by residues asparagine 386 to tyrosine 387, alanine 423, and arginine 440.

The protein in the N-terminal section; belongs to the N-acetylglucosamine-1-phosphate uridyltransferase family. It in the C-terminal section; belongs to the transferase hexapeptide repeat family. As to quaternary structure, homotrimer. Mg(2+) serves as cofactor.

The protein resides in the cytoplasm. The enzyme catalyses alpha-D-glucosamine 1-phosphate + acetyl-CoA = N-acetyl-alpha-D-glucosamine 1-phosphate + CoA + H(+). It catalyses the reaction N-acetyl-alpha-D-glucosamine 1-phosphate + UTP + H(+) = UDP-N-acetyl-alpha-D-glucosamine + diphosphate. It functions in the pathway nucleotide-sugar biosynthesis; UDP-N-acetyl-alpha-D-glucosamine biosynthesis; N-acetyl-alpha-D-glucosamine 1-phosphate from alpha-D-glucosamine 6-phosphate (route II): step 2/2. The protein operates within nucleotide-sugar biosynthesis; UDP-N-acetyl-alpha-D-glucosamine biosynthesis; UDP-N-acetyl-alpha-D-glucosamine from N-acetyl-alpha-D-glucosamine 1-phosphate: step 1/1. It participates in bacterial outer membrane biogenesis; LPS lipid A biosynthesis. Catalyzes the last two sequential reactions in the de novo biosynthetic pathway for UDP-N-acetylglucosamine (UDP-GlcNAc). The C-terminal domain catalyzes the transfer of acetyl group from acetyl coenzyme A to glucosamine-1-phosphate (GlcN-1-P) to produce N-acetylglucosamine-1-phosphate (GlcNAc-1-P), which is converted into UDP-GlcNAc by the transfer of uridine 5-monophosphate (from uridine 5-triphosphate), a reaction catalyzed by the N-terminal domain. This chain is Bifunctional protein GlmU, found in Bacillus velezensis (strain DSM 23117 / BGSC 10A6 / LMG 26770 / FZB42) (Bacillus amyloliquefaciens subsp. plantarum).